A 302-amino-acid chain; its full sequence is Quinolinate synthase (302 aa).

Residues His24 and Ser41 each coordinate iminosuccinate. A [4Fe-4S] cluster-binding site is contributed by Cys86. Iminosuccinate contacts are provided by residues 112 to 114 and Ser129; that span reads YVN. Cys171 is a binding site for [4Fe-4S] cluster. Iminosuccinate-binding positions include 197 to 199 and Thr214; that span reads HPE. Cys259 lines the [4Fe-4S] cluster pocket.

It belongs to the quinolinate synthase family. Type 2 subfamily. [4Fe-4S] cluster is required as a cofactor.

Its subcellular location is the cytoplasm. The catalysed reaction is iminosuccinate + dihydroxyacetone phosphate = quinolinate + phosphate + 2 H2O + H(+). It participates in cofactor biosynthesis; NAD(+) biosynthesis; quinolinate from iminoaspartate: step 1/1. Catalyzes the condensation of iminoaspartate with dihydroxyacetone phosphate to form quinolinate. This Dehalococcoides mccartyi (strain ATCC BAA-2100 / JCM 16839 / KCTC 5957 / BAV1) protein is Quinolinate synthase.